Reading from the N-terminus, the 454-residue chain is Anthocyanidin 3-O-galactosyltransferase 3GT6 (454 aa).

The first 21 residues, 1-21 (MTNSSKGRHVAVLPFPFSTHA), serve as a signal peptide directing secretion. Positions 18 and 20 each coordinate an anthocyanidin. H20 acts as the Proton acceptor in catalysis. The Charge relay role is filled by D117. H148 contributes to the an anthocyanidin binding site. Residues A331, Q333, H348, W351, N352, S353, and E356 each contribute to the UDP-alpha-D-glucose site. G371 contacts an anthocyanidin. UDP-alpha-D-glucose is bound at residue D372. N-linked (GlcNAc...) asparagine glycosylation occurs at N441.

This sequence belongs to the UDP-glycosyltransferase family. Monomer. In terms of tissue distribution, mostly expressed in leaves and flowers and, to a lower extent, in roots. In flowers, mainly observed in petals, stamens and scapes, and at lower levels in pistils and toruses.

It carries out the reaction cyanidin + UDP-alpha-D-galactose = cyanidin 3-O-beta-D-galactoside + UDP + H(+). It catalyses the reaction cyanidin + UDP-alpha-D-glucose = cyanidin 3-O-beta-D-glucoside + UDP + H(+). The catalysed reaction is delphinidin + UDP-alpha-D-glucose = delphinidin 3-O-beta-D-glucoside + UDP. The enzyme catalyses peonidin + UDP-alpha-D-glucose = peonidin 3-O-beta-D-glucoside + UDP. It carries out the reaction pelargonidin + UDP-alpha-D-glucose = pelargonidin 3-O-beta-D-glucoside + UDP. It catalyses the reaction delphinidin + UDP-alpha-D-galactose = delphinidin 3-O-beta-D-galactoside + UDP + H(+). The catalysed reaction is pelargonidin + UDP-alpha-D-galactose = pelargonidin 3-O-beta-D-galactoside betaine + UDP. The enzyme catalyses peonidin + UDP-alpha-D-galactose = peonidin 3-O-beta-D-galactoside + UDP. It carries out the reaction petunidin + UDP-alpha-D-galactose = petunidin 3-O-beta-D-galactoside + UDP. It catalyses the reaction petunidin + UDP-alpha-D-glucose = petunidin 3-O-beta-D-glucoside + UDP. The catalysed reaction is an anthocyanidin + UDP-alpha-D-glucose + H(+) = an anthocyanidin 3-O-beta-D-glucoside + UDP. The enzyme catalyses an anthocyanidin + UDP-alpha-D-galactose = an anthocyanidin 3-O-beta-D-galactoside + UDP. It functions in the pathway pigment biosynthesis; anthocyanin biosynthesis. Functionally, flavonoid 3-O-glycosyltransferase involved in the biosynthesis of anthocyanins conferring flower red/pink colors, mainly anthocyanidin 3-O-glycosides. Catalyzes the addition of UDP-sugar to the 3-OH of anthocyanidin, with a preference for UDP-galactose (UDP-Gal) as sugar donor and cyanidin as substrate; able to use delphinidin, pelargonidin, peonidin and petunidin as substrates in the presence of UDP-Gal, but barely active on malvidin. Can also use UDP-glucose (UDP-Glu) as sugar donor with cyanidin, delphinidin, pelargonidin, peonidin and petunidin as substrates, but not active on malvidin. The polypeptide is Anthocyanidin 3-O-galactosyltransferase 3GT6 (Rhododendron delavayi (Rhododendron)).